A 484-amino-acid polypeptide reads, in one-letter code: Probable chitinase 2 (484 aa).

The N-terminal stretch at 1-33 is a signal peptide; that stretch reads MTLRSRLSGEAPQLWLLLLLASTASSLWASVAA. Positions 41-432 constitute a GH18 domain; that stretch reads KVVVCYVSTW…RTINEATMLA (392 aa). Residues C45 and C70 are joined by a disulfide bond. Chitin contacts are provided by residues 98 to 99 and 125 to 128; these read EE and GGWN. Residue E168 is the Proton donor of the active site. Residues Y169, 231–234, and W384 contribute to the chitin site; that span reads MCYD. At S467 the chain carries Phosphoserine.

This sequence belongs to the glycosyl hydrolase 18 family. Chitinase class II subfamily.

It carries out the reaction Random endo-hydrolysis of N-acetyl-beta-D-glucosaminide (1-&gt;4)-beta-linkages in chitin and chitodextrins.. The protein is Probable chitinase 2 of Drosophila melanogaster (Fruit fly).